Reading from the N-terminus, the 81-residue chain is Putative phytosulfokines 6 (81 aa).

A signal peptide spans 1–20; it reads MKQSLCLAVLFLILSTSSSA. Residues 21 to 72 constitute a propeptide that is removed on maturation; sequence IRRGKEDQEINPLVSATSVEEDSVNKLMGMEYCGEGDEECLRRRMMTESHLD. Sulfotyrosine is present on residues Y73 and Y75. Positions 78–81 are excised as a propeptide; it reads HHKH.

Belongs to the phytosulfokine family. Post-translationally, sulfation is important for activity and for the binding to a putative membrane receptor. PSK-beta is an enzymatic derivative of PSK-alpha. In terms of tissue distribution, expressed in roots, leaves, stems, flowers and siliques. Most abundant in vascular bundles and in root tips.

The protein localises to the secreted. Its function is as follows. Promotes plant cell differentiation, organogenesis and somatic embryogenesis as well as cell proliferation. This is Putative phytosulfokines 6 (PSK6) from Arabidopsis thaliana (Mouse-ear cress).